A 363-amino-acid chain; its full sequence is Protein RecA (363 aa).

Residue 79 to 86 participates in ATP binding; that stretch reads GPESSGKT.

Belongs to the RecA family.

The protein localises to the cytoplasm. Its function is as follows. Can catalyze the hydrolysis of ATP in the presence of single-stranded DNA, the ATP-dependent uptake of single-stranded DNA by duplex DNA, and the ATP-dependent hybridization of homologous single-stranded DNAs. It interacts with LexA causing its activation and leading to its autocatalytic cleavage. In Borrelia turicatae (strain 91E135), this protein is Protein RecA.